The sequence spans 138 residues: Large ribosomal subunit protein uL16c (138 aa).

Belongs to the universal ribosomal protein uL16 family. In terms of assembly, part of the 50S ribosomal subunit.

It localises to the plastid. It is found in the chloroplast. This chain is Large ribosomal subunit protein uL16c, found in Chaetosphaeridium globosum (Charophycean green alga).